The chain runs to 239 residues: 3-dehydroquinate dehydratase (239 aa).

3-dehydroquinate-binding positions include 35-37 (ELR) and Arg-70. The active-site Proton donor/acceptor is His-133. Residue Lys-160 is the Schiff-base intermediate with substrate of the active site. Residues Arg-202 and Gln-225 each contribute to the 3-dehydroquinate site.

It belongs to the type-I 3-dehydroquinase family. Homodimer.

It carries out the reaction 3-dehydroquinate = 3-dehydroshikimate + H2O. It functions in the pathway metabolic intermediate biosynthesis; chorismate biosynthesis; chorismate from D-erythrose 4-phosphate and phosphoenolpyruvate: step 3/7. Functionally, involved in the third step of the chorismate pathway, which leads to the biosynthesis of aromatic amino acids. Catalyzes the cis-dehydration of 3-dehydroquinate (DHQ) and introduces the first double bond of the aromatic ring to yield 3-dehydroshikimate. The protein is 3-dehydroquinate dehydratase of Staphylococcus saprophyticus subsp. saprophyticus (strain ATCC 15305 / DSM 20229 / NCIMB 8711 / NCTC 7292 / S-41).